The primary structure comprises 400 residues: Snake venom metalloproteinase H3 (400 aa).

An N-terminal signal peptide occupies residues 1 to 6 (FPYQGS). A propeptide spanning residues 7 to 176 (SIILESGNVN…KKASQLIVST (170 aa)) is cleaved from the precursor. In terms of domain architecture, Peptidase M12B spans 180 to 377 (KYMEIVIVVD…ENPPCILNKP (198 aa)). Glu-183 and Asp-267 together coordinate Ca(2+). 3 disulfide bridges follow: Cys-291/Cys-372, Cys-331/Cys-356, and Cys-333/Cys-339. Position 316 (His-316) interacts with Zn(2+). Residue Glu-317 is part of the active site. Residues His-320 and His-326 each contribute to the Zn(2+) site. Positions 372, 375, 387, 390, 392, 394, and 400 each coordinate Ca(2+). Residues 378 to 400 (LRTDTVSTPVSGNELLEAGKDYD) constitute a propeptide that is removed on maturation.

Belongs to the venom metalloproteinase (M12B) family. P-I subfamily. Monomer. The cofactor is Zn(2+). In terms of tissue distribution, expressed by the venom gland.

It is found in the secreted. In terms of biological role, snake venom metalloproteinase that impairs hemostasis in the envenomed animal. This chain is Snake venom metalloproteinase H3, found in Deinagkistrodon acutus (Hundred-pace snake).